The primary structure comprises 219 residues: Probable GTP-binding protein EngB (219 aa).

The EngB-type G domain occupies 31–205 (VGVEIAFAGR…LAILNEWCHP (175 aa)). GTP contacts are provided by residues 39–46 (GRSNAGKS), 66–70 (GRTQL), 84–87 (DLPG), 151–154 (TKSD), and 184–186 (FSS). Mg(2+) contacts are provided by S46 and T68.

The protein belongs to the TRAFAC class TrmE-Era-EngA-EngB-Septin-like GTPase superfamily. EngB GTPase family. The cofactor is Mg(2+).

In terms of biological role, necessary for normal cell division and for the maintenance of normal septation. This Shewanella baltica (strain OS223) protein is Probable GTP-binding protein EngB.